A 420-amino-acid polypeptide reads, in one-letter code: NEDD8-specific protease 1 (420 aa).

The span at 257–281 shows a compositional bias: low complexity; sequence KSSDSSETSHESSNSNLKKSSESGS. The interval 257–420 is disordered; the sequence is KSSDSSETSH…EELVSGDFPF (164 aa). Basic and acidic residues predominate over residues 286-296; the sequence is NNHESDKDLHH. Residues 297–310 show a composition bias toward basic residues; it reads EGHHHHHHHHHHHH. A compositionally biased stretch (basic and acidic residues) spans 311 to 324; it reads SHDDDPSSPAEKKQ. Residues Ser-329, Ser-340, and Ser-351 each carry the phosphoserine modification. Basic and acidic residues predominate over residues 355–377; the sequence is NKEDHLPLLSDEKLDKSAIDKIE.

Belongs to the peptidase C48 family. In terms of assembly, interacts with csn1. It is, however, not a component of the signalosome.

The protein localises to the cytoplasm. Functionally, protease that catalyzes two essential functions in the NEDD8 pathway: processing of full-length NEDD8 to its mature form and deconjugation of NEDD8 from targeted proteins such as the pcu1, pcu2 and pcu4 cullins and other proteins. The polypeptide is NEDD8-specific protease 1 (nep1) (Schizosaccharomyces pombe (strain 972 / ATCC 24843) (Fission yeast)).